A 550-amino-acid chain; its full sequence is Glucose-6-phosphate isomerase (550 aa).

Catalysis depends on E356, which acts as the Proton donor. Catalysis depends on residues H387 and K515.

It belongs to the GPI family.

Its subcellular location is the cytoplasm. The catalysed reaction is alpha-D-glucose 6-phosphate = beta-D-fructose 6-phosphate. The protein operates within carbohydrate biosynthesis; gluconeogenesis. It participates in carbohydrate degradation; glycolysis; D-glyceraldehyde 3-phosphate and glycerone phosphate from D-glucose: step 2/4. Its function is as follows. Catalyzes the reversible isomerization of glucose-6-phosphate to fructose-6-phosphate. This chain is Glucose-6-phosphate isomerase, found in Aliivibrio salmonicida (strain LFI1238) (Vibrio salmonicida (strain LFI1238)).